The following is a 97-amino-acid chain: Placenta-specific protein 9 (97 aa).

The signal sequence occupies residues 1–22 (MRPLLCALTGLALLRAAGSLAA).

It belongs to the PLAC9 family.

The protein resides in the secreted. This chain is Placenta-specific protein 9 (PLAC9), found in Homo sapiens (Human).